We begin with the raw amino-acid sequence, 816 residues long: Molybdenum cofactor sulfurase (816 aa).

Residue Lys273 is modified to N6-(pyridoxal phosphate)lysine. Cys427 is a catalytic residue. Residues 647–812 (NSDSQSHSCI…IRVGEEIIPN (166 aa)) enclose the MOSC domain.

This sequence belongs to the class-V pyridoxal-phosphate-dependent aminotransferase family. MOCOS subfamily. The cofactor is pyridoxal 5'-phosphate. As to expression, ubiquitously expressed.

The catalysed reaction is Mo-molybdopterin + L-cysteine + AH2 = thio-Mo-molybdopterin + L-alanine + A + H2O. Its pathway is cofactor biosynthesis; molybdopterin biosynthesis. In terms of biological role, sulfurates the molybdenum cofactor. Sulfation of molybdenum is essential for xanthine dehydrogenase (XDH) and aldehyde oxidase (ADO) enzymes in which molybdenum cofactor is liganded by 1 oxygen and 1 sulfur atom in active form. The protein is Molybdenum cofactor sulfurase (FLACCA) of Solanum lycopersicum (Tomato).